Consider the following 395-residue polypeptide: MASIEAALAEIKRGVEELIPEEELIAKLKENRPLRIKLGADPTAPDIHLGHTVILNKLRTFQDLGHDVTFLIGDFTGMVGDPTGKNTTRPPLTREDVLRNAETYKQQVFKILDPAKTKIQFNSEWLSKLGAEGMIRLASNQTVARMLERDDFKKRYNNGQPIAIHEFMYPLLQGYDSVAMETDVELGGTDQKFNLLMGRELQKANGQKPQVVLMMPLLVGLDGEKKMSKSAHNYIGVSEAPSEMFGKIMSISDDLMWSYYELLSFRPLEEVAQFKAEVANGANPRDIKILLAKEIIARFHSQADADAAEQEFINRFQKGAMPEEMPEFEFESGIAISNLLKEAGLVASTSDALRMIKQGAVKLDGEKLEDAKLIPACGTSVYQVGKRKFARVTIK.

Residues 42-51 (PTAPDIHLGH) carry the 'HIGH' region motif. The 'KMSKS' region signature appears at 226–230 (KMSKS). Position 229 (lysine 229) interacts with ATP. The 61-residue stretch at 334 to 394 (IAISNLLKEA…GKRKFARVTI (61 aa)) folds into the S4 RNA-binding domain.

It belongs to the class-I aminoacyl-tRNA synthetase family. TyrS type 2 subfamily. Homodimer.

Its subcellular location is the cytoplasm. The catalysed reaction is tRNA(Tyr) + L-tyrosine + ATP = L-tyrosyl-tRNA(Tyr) + AMP + diphosphate + H(+). Functionally, catalyzes the attachment of tyrosine to tRNA(Tyr) in a two-step reaction: tyrosine is first activated by ATP to form Tyr-AMP and then transferred to the acceptor end of tRNA(Tyr). The polypeptide is Tyrosine--tRNA ligase 2 (Vibrio cholerae serotype O1 (strain ATCC 39315 / El Tor Inaba N16961)).